A 503-amino-acid chain; its full sequence is TGF-beta receptor type-1 (503 aa).

An N-terminal signal peptide occupies residues 1–29 (MEAAAAAPRRPQLLIVLVAAATLLPGAKA). Over 30–126 (LQCFCHLCTK…QSAGLGPVEL (97 aa)) the chain is Extracellular. 5 disulfides stabilise this stretch: Cys32-Cys50, Cys34-Cys37, Cys44-Cys67, Cys82-Cys96, and Cys97-Cys102. Asn41 carries an N-linked (GlcNAc...) asparagine glycan. Residues 127–147 (AAVIAGPVCFVCIALMLMVYI) traverse the membrane as a helical segment. Residues 148-503 (CHNRTVIHHR…QLSQQEGIKM (356 aa)) lie on the Cytoplasmic side of the membrane. At Ser165 the chain carries Phosphoserine. The 30-residue stretch at 175-204 (TTLKDLIYDMTTSGSGSGLPLLVQRTIART) folds into the GS domain. Phosphothreonine; by TGFBR2 is present on residues Thr185 and Thr186. Phosphoserine; by TGFBR2 is present on residues Ser187, Ser189, and Ser191. Residues 193–194 (LP) carry the FKBP1A-binding motif. The region spanning 205-495 (IVLQESIGKG…LRIKKTLSQL (291 aa)) is the Protein kinase domain. Residues 211–219 (IGKGRFGEV) and Lys232 each bind ATP. A Glycyl lysine isopeptide (Lys-Gly) (interchain with G-Cter in ubiquitin) cross-link involves residue Lys268. Asp333 serves as the catalytic Proton acceptor. A Glycyl lysine isopeptide (Lys-Gly) (interchain with G-Cter in SUMO) cross-link involves residue Lys391.

It belongs to the protein kinase superfamily. TKL Ser/Thr protein kinase family. TGFB receptor subfamily. Homodimer; in the endoplasmic reticulum but also at the cell membrane. Heterohexamer; TGFB1, TGFB2 and TGFB3 homodimeric ligands assemble a functional receptor composed of two TGFBR1 and TGFBR2 heterodimers to form a ligand-receptor heterohexamer. The respective affinity of TGBRB1 and TGFBR2 for the ligands may modulate the kinetics of assembly of the receptor and may explain the different biological activities of TGFB1, TGFB2 and TGFB3. Component of a complex composed of TSC22D1 (via N-terminus), TGFBR1 and TGFBR2; the interaction between TSC22D1 and TGFBR1 is inhibited by SMAD7 and promoted by TGFB1. Interacts with CD109; inhibits TGF-beta receptor activation in keratinocytes. Interacts with RBPMS. Interacts (unphosphorylated) with FKBP1A; prevents TGFBR1 phosphorylation by TGFBR2 and stabilizes it in the inactive conformation. Interacts with SMAD2, SMAD3 and ZFYVE9; ZFYVE9 recruits SMAD2 and SMAD3 to the TGF-beta receptor. Interacts with TRAF6 and MAP3K7; induces MAP3K7 activation by TRAF6. Interacts with PARD6A; involved in TGF-beta induced epithelial to mesenchymal transition. Interacts with NEDD4L. Interacts with SMAD7, SMURF1 and SMURF2; SMAD7 recruits NEDD4L, SMURF1 and SMURF2 to the TGF-beta receptor. Interacts with USP15 and VPS39. Interacts with SDCBP (via C-terminus). Interacts with CAV1 and this interaction is impaired in the presence of SDCBP. Interacts with APPL1; interaction is TGF beta dependent; mediates trafficking of the TGFBR1 from the endosomes to the nucleus via microtubules in a TRAF6-dependent manner. Interacts with GPR50; this interaction promotes the constitutive activation of SMAD signaling pathway. Mg(2+) serves as cofactor. Mn(2+) is required as a cofactor. Post-translationally, phosphorylated at basal levels in the absence of ligand. Activated upon phosphorylation by TGFBR2, mainly in the GS domain. Phosphorylation in the GS domain abrogates FKBP1A-binding. N-Glycosylated. In terms of processing, ubiquitinated; undergoes ubiquitination catalyzed by several E3 ubiquitin ligases including SMURF1, SMURF2 and NEDD4L2. Results in the proteasomal and/or lysosomal degradation of the receptor thereby negatively regulating its activity. Deubiquitinated by USP15, leading to stabilization of the protein and enhanced TGF-beta signal. Its ubiquitination and proteasome-mediated degradation is negatively regulated by SDCBP. Ubiquitinated by BFAR via'Lys-63'-linked ubiquitination at Lys-268, leading to TGF-beta signaling activation.

It localises to the cell membrane. The protein localises to the cell junction. The protein resides in the tight junction. Its subcellular location is the membrane raft. It is found in the cell surface. It carries out the reaction L-threonyl-[receptor-protein] + ATP = O-phospho-L-threonyl-[receptor-protein] + ADP + H(+). It catalyses the reaction L-seryl-[receptor-protein] + ATP = O-phospho-L-seryl-[receptor-protein] + ADP + H(+). With respect to regulation, kept in an inactive conformation by FKBP1A preventing receptor activation in absence of ligand. CD109 is another inhibitor of the receptor. Its function is as follows. Transmembrane serine/threonine kinase forming with the TGF-beta type II serine/threonine kinase receptor, TGFBR2, the non-promiscuous receptor for the TGF-beta cytokines TGFB1, TGFB2 and TGFB3. Transduces the TGFB1, TGFB2 and TGFB3 signal from the cell surface to the cytoplasm and is thus regulating a plethora of physiological and pathological processes including cell cycle arrest in epithelial and hematopoietic cells, control of mesenchymal cell proliferation and differentiation, wound healing, extracellular matrix production, immunosuppression and carcinogenesis. The formation of the receptor complex composed of 2 TGFBR1 and 2 TGFBR2 molecules symmetrically bound to the cytokine dimer results in the phosphorylation and the activation of TGFBR1 by the constitutively active TGFBR2. Activated TGFBR1 phosphorylates SMAD2 which dissociates from the receptor and interacts with SMAD4. The SMAD2-SMAD4 complex is subsequently translocated to the nucleus where it modulates the transcription of the TGF-beta-regulated genes. This constitutes the canonical SMAD-dependent TGF-beta signaling cascade. Also involved in non-canonical, SMAD-independent TGF-beta signaling pathways. For instance, TGFBR1 induces TRAF6 autoubiquitination which in turn results in MAP3K7 ubiquitination and activation to trigger apoptosis. Also regulates epithelial to mesenchymal transition through a SMAD-independent signaling pathway through PARD6A phosphorylation and activation. The chain is TGF-beta receptor type-1 (Tgfbr1) from Mus musculus (Mouse).